Here is a 182-residue protein sequence, read N- to C-terminus: MSKQLTAQAPVDPIVLGKMGSSYGIRGWLRVFSSTEDAESIFDYQPWFIQKAGQWQQVQLESWKHHNQDMIIKLKGVDDRDAANLLTNCEIVVDSSQLPQLEEGDYYWKDLMGCQVVTTEGYDLGKVVDMMETGSNDVLVIKANLKDAFGIKERLVPFLDGQVIKKVDLTTRSIEVDWDPGF.

The PRC barrel domain maps to 103 to 182; it reads EGDYYWKDLM…SIEVDWDPGF (80 aa).

The protein belongs to the RimM family. In terms of assembly, binds ribosomal protein uS19.

It is found in the cytoplasm. An accessory protein needed during the final step in the assembly of 30S ribosomal subunit, possibly for assembly of the head region. Essential for efficient processing of 16S rRNA. May be needed both before and after RbfA during the maturation of 16S rRNA. It has affinity for free ribosomal 30S subunits but not for 70S ribosomes. In Escherichia coli O139:H28 (strain E24377A / ETEC), this protein is Ribosome maturation factor RimM.